The primary structure comprises 890 residues: Translation initiation factor IF-2 (890 aa).

The segment at 50–304 is disordered; the sequence is LRQGSPEQEE…LQQEFERPTA (255 aa). Composition is skewed to basic and acidic residues over residues 112-125, 136-147, and 217-262; these read KRSD…RKQE, RALEQEEAKREE, and ALKE…QEAK. In terms of domain architecture, tr-type G spans 390–559; the sequence is GRAPVVTVMG…VLQAELQELK (170 aa). The tract at residues 399 to 406 is G1; the sequence is GHVDHGKT. A GTP-binding site is contributed by 399–406; it reads GHVDHGKT. Residues 424 to 428 form a G2 region; sequence GITQH. A G3 region spans residues 445–448; it reads DTPG. GTP-binding positions include 445-449 and 499-502; these read DTPGH and NKMD. Positions 499-502 are G4; the sequence is NKMD. A G5 region spans residues 535 to 537; it reads SAM.

The protein belongs to the TRAFAC class translation factor GTPase superfamily. Classic translation factor GTPase family. IF-2 subfamily.

Its subcellular location is the cytoplasm. Functionally, one of the essential components for the initiation of protein synthesis. Protects formylmethionyl-tRNA from spontaneous hydrolysis and promotes its binding to the 30S ribosomal subunits. Also involved in the hydrolysis of GTP during the formation of the 70S ribosomal complex. The sequence is that of Translation initiation factor IF-2 from Halorhodospira halophila (strain DSM 244 / SL1) (Ectothiorhodospira halophila (strain DSM 244 / SL1)).